We begin with the raw amino-acid sequence, 230 residues long: Preflagellin peptidase (230 aa).

Position 1 (Met-1) is a topological domain, cytoplasmic. Residues 2-18 traverse the membrane as a helical segment; sequence IEYIIGALGLIIASVQD. The Extracellular segment spans residues 19–23; it reads FRSRE. Residues 24–46 traverse the membrane as a helical segment; that stretch reads IEDYIWIFLAVFGVLFAIYSSIT. Residues 47-49 lie on the Cytoplasmic side of the membrane; sequence LLD. A helical transmembrane segment spans residues 50–72; sequence YSILINSISGFVICFILGYMMFL. At 73–78 the chain is on the extracellular side; it reads SGIGGG. Residues 79-89 form a helical membrane-spanning segment; that stretch reads DGKMLIGLGAL. The Cytoplasmic segment spans residues 90-110; it reads VPKFQMPIYTSLGTLLNLNYV. A helical transmembrane segment spans residues 111–139; sequence PTFPIMVFINGIFFMVFLPFVILFRNILN. Residues 140–204 are Extracellular-facing; it reads GARPKTGKEF…EEIWVTPQIP (65 aa). Residues 205–216 form a helical membrane-spanning segment; sequence LIIPITLSYLVT. Residues 217 to 230 are Cytoplasmic-facing; the sequence is PIIGDRILDFLIPF.

It belongs to the peptidase A24 family. Archaeal preflagellin peptidase subfamily.

It localises to the cell membrane. It carries out the reaction Cleaves the signal peptide of 3 to 12 amino acids from the N-terminal of preflagellin, usually at Arg-Gly-|- or Lys-Gly-|-, to release flagellin.. In terms of biological role, cleaves the N-terminal leader peptide from preflagellins. In Methanococcus maripaludis (strain C6 / ATCC BAA-1332), this protein is Preflagellin peptidase (flaK).